We begin with the raw amino-acid sequence, 147 residues long: Hemoglobin subunit beta (147 aa).

A Globin domain is found at 3 to 147 (EWTDDERAII…VVSALGRQYH (145 aa)). Heme b-binding residues include His-64 and His-93.

Belongs to the globin family. Heterotetramer of two alpha chains and two beta chains. In terms of tissue distribution, red blood cells.

Functionally, involved in oxygen transport from gills to the various peripheral tissues. The sequence is that of Hemoglobin subunit beta (hbb) from Melanogrammus aeglefinus (Haddock).